The sequence spans 266 residues: GRIP and coiled-coil domain-containing protein C365.11 (266 aa).

A compositionally biased stretch (polar residues) spans 1–13 (METTVSAKNSLEN). Residues 1-88 (METTVSAKNS…LDEKVKELEN (88 aa)) form a disordered region. Serine 10 carries the phosphoserine modification. Residues 36–49 (ASKKKRKNRKKKKN) show a composition bias toward basic residues. Positions 63-88 (EEQRSGSIDSKDKEKPLDEKVKELEN) are enriched in basic and acidic residues. A coiled-coil region spans residues 73-188 (KDKEKPLDEK…ESVKSHESEL (116 aa)). Phosphoserine is present on residues serine 202 and serine 204. In terms of domain architecture, GRIP spans 216–264 (ISKELINKEYARNVLLQFLENHEHRDKILPILSTALDLEEVHQHLILKN).

It is found in the cytoplasm. The chain is GRIP and coiled-coil domain-containing protein C365.11 from Schizosaccharomyces pombe (strain 972 / ATCC 24843) (Fission yeast).